Reading from the N-terminus, the 273-residue chain is 1,4-dihydroxy-2-naphthoyl-CoA synthase (273 aa).

Substrate contacts are provided by residues Arg34, 73–77 (SGGDQ), Tyr85, 117–121 (YAVGG), Thr143, Ser149, Tyr246, and Lys261. Residue 142–144 (QTG) participates in hydrogencarbonate binding. Over residues 254–265 (GRDAFKEKRDPD) the composition is skewed to basic and acidic residues. A disordered region spans residues 254-273 (GRDAFKEKRDPDFDQFPKFP).

The protein belongs to the enoyl-CoA hydratase/isomerase family. MenB subfamily. It depends on hydrogencarbonate as a cofactor.

It carries out the reaction 2-succinylbenzoyl-CoA + H(+) = 1,4-dihydroxy-2-naphthoyl-CoA + H2O. The protein operates within quinol/quinone metabolism; 1,4-dihydroxy-2-naphthoate biosynthesis; 1,4-dihydroxy-2-naphthoate from chorismate: step 6/7. It functions in the pathway quinol/quinone metabolism; menaquinone biosynthesis. Functionally, converts o-succinylbenzoyl-CoA (OSB-CoA) to 1,4-dihydroxy-2-naphthoyl-CoA (DHNA-CoA). This chain is 1,4-dihydroxy-2-naphthoyl-CoA synthase, found in Staphylococcus aureus (strain MSSA476).